The primary structure comprises 505 residues: N-succinylglutamate 5-semialdehyde dehydrogenase (505 aa).

234-239 contacts NAD(+); it reads GSAHTG. Active-site residues include Glu-257 and Cys-291.

It belongs to the aldehyde dehydrogenase family. AstD subfamily.

The enzyme catalyses N-succinyl-L-glutamate 5-semialdehyde + NAD(+) + H2O = N-succinyl-L-glutamate + NADH + 2 H(+). The protein operates within amino-acid degradation; L-arginine degradation via AST pathway; L-glutamate and succinate from L-arginine: step 4/5. Functionally, catalyzes the NAD-dependent reduction of succinylglutamate semialdehyde into succinylglutamate. The protein is N-succinylglutamate 5-semialdehyde dehydrogenase of Yersinia pestis bv. Antiqua (strain Antiqua).